Here is a 546-residue protein sequence, read N- to C-terminus: Chaperonin GroEL (546 aa).

ATP-binding positions include 29–32 (TMGP), Lys-50, 86–90 (DGTTT), Gly-414, and Asp-492.

This sequence belongs to the chaperonin (HSP60) family. As to quaternary structure, forms a cylinder of 14 subunits composed of two heptameric rings stacked back-to-back. Interacts with the co-chaperonin GroES.

The protein resides in the cytoplasm. The catalysed reaction is ATP + H2O + a folded polypeptide = ADP + phosphate + an unfolded polypeptide.. Its function is as follows. Together with its co-chaperonin GroES, plays an essential role in assisting protein folding. The GroEL-GroES system forms a nano-cage that allows encapsulation of the non-native substrate proteins and provides a physical environment optimized to promote and accelerate protein folding. This chain is Chaperonin GroEL, found in Helicobacter pylori (strain Shi470).